A 245-amino-acid polypeptide reads, in one-letter code: Acetoacetate decarboxylase (245 aa).

The Schiff-base intermediate with acetoacetate role is filled by Lys116.

Belongs to the ADC family.

The enzyme catalyses acetoacetate + H(+) = acetone + CO2. Its function is as follows. Catalyzes the conversion of acetoacetate to acetone and carbon dioxide. The sequence is that of Acetoacetate decarboxylase from Acidiphilium cryptum (strain JF-5).